We begin with the raw amino-acid sequence, 693 residues long: MAREFSLEKTRNIGIMAHIDAGKTTTTERILYYTGRIHKIGETHEGASQMDWMEQEQDRGITITSAATTAAWEGHRVNIIDTPGHVDFTVEVERSLRVLDGAVTVLDAQSGVEPQTETVWRQATTYGVPRIVFVNKMDKLGANFEYSVSTLHDRLQANAAPIQLPIGAEDEFEAIIDLVEMKCFKYTNDLGTEIEEIEIPEDHLDRAEEARASLIEAVAETSDELMEKYLGDEEISVSELKEAIRQATTNVEFYPVLCGTAFKNKGVQLMLDAVIDYLPSPLDVKPIIGHRASNPEEEVIAKADDSAEFAALAFKVMTDPYVGKLTFFRVYSGTMTSGSYVKNSTKGKRERVGRLLQMHANSRQEIDTVYSGDIAAAVGLKDTGTGDTLCGEKNDIILESMEFPEPVIHLSVEPKSKADQDKMTQALVKLQEEDPTFHAHTDEETGQVIIGGMGELHLDILVDRMKKEFNVECNVGAPMVSYRETFKSSAQVQGKFSRQSGGRGQYGDVHIEFTPNETGAGFEFENAIVGGVVPREYIPSVEAGLKDAMENGVLAGYPLIDVKAKLYDGSYHDVDSSEMAFKIAASLALKEAAKKCDPVILEPMMKVTIEMPEEYMGDIMGDVTSRRGRVDGMEPRGNAQVVNAYVPLSEMFGYATSLRSNTQGRGTYTMYFDHYAEVPKSIAEDIIKKNKGE.

The 275-residue stretch at E8 to L282 folds into the tr-type G domain. Residues A17 to T24, D81 to H85, and N135 to D138 each bind GTP.

This sequence belongs to the TRAFAC class translation factor GTPase superfamily. Classic translation factor GTPase family. EF-G/EF-2 subfamily.

It localises to the cytoplasm. In terms of biological role, catalyzes the GTP-dependent ribosomal translocation step during translation elongation. During this step, the ribosome changes from the pre-translocational (PRE) to the post-translocational (POST) state as the newly formed A-site-bound peptidyl-tRNA and P-site-bound deacylated tRNA move to the P and E sites, respectively. Catalyzes the coordinated movement of the two tRNA molecules, the mRNA and conformational changes in the ribosome. This chain is Elongation factor G, found in Staphylococcus aureus (strain Mu3 / ATCC 700698).